A 402-amino-acid chain; its full sequence is Protein lag-2 (402 aa).

The first 15 residues, 1-15 (MIAYFLLLLTCLPVL), serve as a signal peptide directing secretion. Residues 16-279 (QARVEVHQEF…TTTTPTTVEI (264 aa)) are Extracellular-facing. 2 N-linked (GlcNAc...) asparagine glycosylation sites follow: N72 and N105. The DSL domain occupies 122–166 (VTCARNYFGNRCENFCDAHLAKAARKRCDAMGRLRCDIGWMGPHC). 9 disulfides stabilise this stretch: C124–C133, C137–C149, C157–C166, C175–C183, C177–C204, C206–C215, C233–C245, C239–C254, and C256–C265. 2 consecutive EGF-like domains span residues 171 to 216 (DPRK…TRCE) and 229 to 266 (RPDA…EFCE). N194 is a glycosylation site (N-linked (GlcNAc...) asparagine). A helical transmembrane segment spans residues 280 to 306 (TVSTSGYSSAVYITVALFVIFSIIIGC). Topologically, residues 307–402 (FKYKFKPMRQ…PPSIPACHYV (96 aa)) are cytoplasmic.

In terms of assembly, may interact with lin-12 / Notch receptor. As to expression, expressed in the gonad distal tip cell (DTC) of hermaphrodites.

Its subcellular location is the cell membrane. Probable ligand for lin-12/Notch and glp-1/Notch receptors and involved in the mediation of Notch signaling. Involved in the lin-12/Notch pathway signaling of cell fate in vulval precursor cells (VPCs) and in the postembryonic mesodermal lineage (M lineage), acting redundantly with dsl-1 and apx-1. Functions in uterine cells to promote basement membrane mobility during tissue remodeling. Required for oocyte growth control, acting redundantly with apx-1, perhaps signaling via the glp-1/Notch pathway. Plays a role in Notch-dependent induction of left-right asymmetry in interneurons and motoneurons. Involved in maintaining the developmentally arrested larval state known as dauer, probably signaling in the glp-1/Notch pathway. Required for normal sleep bout quantity and arousal thresholds during the transition from the last larval stage to adulthood in well-fed animals. In Caenorhabditis elegans, this protein is Protein lag-2.